The sequence spans 2080 residues: Dedicator of cytokinesis protein 6 (2080 aa).

A compositionally biased stretch (basic and acidic residues) spans 20–31; that stretch reads EVRKQVSRERSG. 3 disordered regions span residues 20 to 44, 156 to 189, and 408 to 441; these read EVRK…SSLG, QDTP…SGAS, and PQDR…GDDA. A compositionally biased stretch (low complexity) spans 32-42; the sequence is SPHSSRRSSSS. A Phosphoserine modification is found at Ser-178. The segment covering 408 to 425 has biased composition (basic and acidic residues); it reads PQDRDSDSEGERRPTWAE. The C2 DOCK-type domain occupies 546 to 712; it reads RNLLFVYPHS…GVFSVELTAV (167 aa). At Arg-863 the chain carries Omega-N-methylarginine. A phosphoserine mark is found at Ser-870, Ser-878, and Ser-882. The disordered stretch occupies residues 1101–1123; sequence ASPSPSVSSTTSQSSTFSSQAPD. Low complexity predominate over residues 1104 to 1122; sequence SPSVSSTTSQSSTFSSQAP. Ser-1341 is subject to Phosphoserine. A DOCKER domain is found at 1620–2056; that stretch reads RGYQGSPDLR…LQPLLTQRLP (437 aa). Thr-2064 bears the Phosphothreonine mark. Phosphoserine is present on residues Ser-2065 and Ser-2069.

Belongs to the DOCK family. Widely expressed with highest levels in lung and heart.

Its subcellular location is the cytoplasm. It localises to the perinuclear region. Acts as a guanine nucleotide exchange factor (GEF) for CDC42 and RAC1 small GTPases. Through its activation of CDC42 and RAC1, regulates neurite outgrowth in an vitro differentiation system. This Mus musculus (Mouse) protein is Dedicator of cytokinesis protein 6 (Dock6).